Consider the following 331-residue polypeptide: Phosphoribosylformylglycinamidine cyclo-ligase (331 aa).

This sequence belongs to the AIR synthase family.

It is found in the cytoplasm. The enzyme catalyses 2-formamido-N(1)-(5-O-phospho-beta-D-ribosyl)acetamidine + ATP = 5-amino-1-(5-phospho-beta-D-ribosyl)imidazole + ADP + phosphate + H(+). The protein operates within purine metabolism; IMP biosynthesis via de novo pathway; 5-amino-1-(5-phospho-D-ribosyl)imidazole from N(2)-formyl-N(1)-(5-phospho-D-ribosyl)glycinamide: step 2/2. The sequence is that of Phosphoribosylformylglycinamidine cyclo-ligase from Clostridium novyi (strain NT).